Consider the following 62-residue polypeptide: Large ribosomal subunit protein uL29 (62 aa).

This sequence belongs to the universal ribosomal protein uL29 family.

In Helicobacter hepaticus (strain ATCC 51449 / 3B1), this protein is Large ribosomal subunit protein uL29.